Reading from the N-terminus, the 1374-residue chain is Ribonuclease 3 (1374 aa).

Disordered regions lie at residues 1 to 95, 130 to 406, and 452 to 497; these read MMQG…PLPP, PPVP…EEEE, and LGSR…SSSS. Over residues 59-68 the composition is skewed to polar residues; sequence PSTTFSNSPA. Pro residues-rich tracts occupy residues 70–95 and 145–160; these read NFLP…PLPP and MMPP…PPVM. The span at 182 to 202 shows a compositional bias: low complexity; it reads FNSFQNNPSSFLPSANNSSSP. Basic and acidic residues-rich tracts occupy residues 216-289 and 298-313; these read PSER…ERER and RRSP…EYKR. Phosphoserine occurs at positions 355 and 373. Residues 364 to 399 show a composition bias toward basic and acidic residues; the sequence is RWEEEKDRWSDNQSSGKDKNYTSIKEKEPEETMPDK. Residues 390–1365 are necessary for interaction with DGCR8 and pri-miRNA processing activity; that stretch reads KEPEETMPDK…RWEREHQERE (976 aa). Residues 475–491 show a composition bias toward acidic residues; it reads EDLESSSESECESDEDS. Positions 536, 538, 549, 561, 609, 676, and 680 each coordinate Zn(2+). RNase III domains are found at residues 876-1056 and 1107-1233; these read LMHL…LEGS and LTEF…IDKD. A Mg(2+)-binding site is contributed by glutamate 969. Histidine 1026 is a Zn(2+) binding site. Mg(2+)-binding residues include asparagine 1042, glutamate 1045, glutamate 1147, aspartate 1219, and glutamate 1222. Positions 1260–1334 constitute a DRBM domain; it reads DPKSQLQQCC…AMDALEKYNF (75 aa).

This sequence belongs to the ribonuclease III family. As to quaternary structure, component of the microprocessor complex, or pri-miRNA processing protein complex, which is composed of DROSHA and DGCR8. The microprocessor complex is a heterotrimer; each of the two DROSHA RNase III domains binds one DGCR8 (via C-terminal region). Interacts with SP1 and SNIP1. Interacts with SRRT/ARS2. Interacts with CPSF3 and ISY1; this interaction is in an RNA dependent manner. Interacts with PUS10; interaction promotes pri-miRNAs processing. The cofactor is Mg(2+). Requires Mn(2+) as cofactor. In terms of processing, degraded by autophagy in response to neuronal activity in motor neurons. In terms of tissue distribution, ubiquitous.

It localises to the nucleus. The protein resides in the nucleolus. It is found in the cytoplasm. It catalyses the reaction Endonucleolytic cleavage to 5'-phosphomonoester.. Functionally, ribonuclease III double-stranded (ds) RNA-specific endoribonuclease that is involved in the initial step of microRNA (miRNA) biogenesis. Component of the microprocessor complex that is required to process primary miRNA transcripts (pri-miRNAs) to release precursor miRNA (pre-miRNA) in the nucleus. Within the microprocessor complex, DROSHA cleaves the 3' and 5' strands of a stem-loop in pri-miRNAs (processing center 11 bp from the dsRNA-ssRNA junction) to release hairpin-shaped pre-miRNAs that are subsequently cut by the cytoplasmic DICER to generate mature miRNAs. Involved also in pre-rRNA processing. Cleaves double-strand RNA and does not cleave single-strand RNA. Involved in the formation of GW bodies. Plays a role in growth homeostasis in response to autophagy in motor neurons. This chain is Ribonuclease 3 (DROSHA), found in Homo sapiens (Human).